Here is a 265-residue protein sequence, read N- to C-terminus: Small ribosomal subunit protein uS2 (265 aa).

This sequence belongs to the universal ribosomal protein uS2 family.

This Ligilactobacillus salivarius (strain UCC118) (Lactobacillus salivarius) protein is Small ribosomal subunit protein uS2.